A 69-amino-acid chain; its full sequence is Large ribosomal subunit protein uL29 (69 aa).

It belongs to the universal ribosomal protein uL29 family.

This is Large ribosomal subunit protein uL29 from Treponema denticola (strain ATCC 35405 / DSM 14222 / CIP 103919 / JCM 8153 / KCTC 15104).